The sequence spans 293 residues: Probable chromosome 2-partitioning protein ParB (293 aa).

Belongs to the ParB family.

Its function is as follows. Involved in chromosome partition. Localize to both poles of the predivisional cell following completion of DNA replication. Binds to the DNA origin of replication. This is Probable chromosome 2-partitioning protein ParB (parB2) from Deinococcus radiodurans (strain ATCC 13939 / DSM 20539 / JCM 16871 / CCUG 27074 / LMG 4051 / NBRC 15346 / NCIMB 9279 / VKM B-1422 / R1).